A 325-amino-acid chain; its full sequence is MKIPAMMSLLLVSVGLRDGVQVQSYSISQLDIFSQETPLDMAPASFDDQYAGCLADMTAALPDLNHSEFQANKVYADGWAQANNQWQERRAWGSVWGSLPPSPPGFRDEHGVALLAYTANSPLHKEFNAAVREAGRSRAHYLHHFSFKTLHFLLTEALQLLRSHRSRGCQQVYRGVHGLRFRPAGPGATVRLGGFASASLKNVAAQQFGEDTFFGIWTCLGAPIRGYSFFPEEEEVLIPPFETFQVINTSRPTQGPARIYLRALGKRSTYNCEYIKEKKCRSGPCWLGSSAPGSISASCSLLLLLLFLVLSALPENPGLQQLTRC.

The first 22 residues, 1–22 (MKIPAMMSLLLVSVGLRDGVQV), serve as a signal peptide directing secretion. Intrachain disulfides connect cysteine 53-cysteine 272 and cysteine 169-cysteine 219. N-linked (GlcNAc...) asparagine glycosylation occurs at asparagine 65. The TR mART core domain maps to 73-268 (KVYADGWAQA…IYLRALGKRS (196 aa)). NAD(+) contacts are provided by tyrosine 117 and arginine 174. Residues arginine 174 and serine 197 contribute to the active site. Residue serine 228 participates in NAD(+) binding. Residue glutamate 235 is part of the active site. N-linked (GlcNAc...) asparagine glycosylation is present at asparagine 248. Serine 290 is lipidated: GPI-anchor amidated serine. A propeptide spans 291–325 (APGSISASCSLLLLLLFLVLSALPENPGLQQLTRC) (removed in mature form).

It belongs to the Arg-specific ADP-ribosyltransferase family. In terms of tissue distribution, abundantly expressed in cardiac and skeletal muscle. Low levels also found in lung.

The protein resides in the sarcoplasmic reticulum membrane. It carries out the reaction L-arginyl-[protein] + NAD(+) = N(omega)-(ADP-D-ribosyl)-L-arginyl-[protein] + nicotinamide + H(+). Its function is as follows. Has ADP-ribosyltransferase activity toward GLP1R. This is GPI-linked NAD(P)(+)--arginine ADP-ribosyltransferase 1 (Art1) from Mus musculus (Mouse).